A 302-amino-acid polypeptide reads, in one-letter code: Glutaminase (302 aa).

Residues Ser-61, Asn-111, Glu-155, Asn-162, Tyr-186, Tyr-238, and Val-256 each contribute to the substrate site.

The protein belongs to the glutaminase family. In terms of assembly, homotetramer.

It catalyses the reaction L-glutamine + H2O = L-glutamate + NH4(+). This Pseudomonas fluorescens (strain Pf0-1) protein is Glutaminase.